The following is a 506-amino-acid chain: L-amino-acid oxidase (506 aa).

A signal peptide spans 1-18 (MNVFFTFSLLFLAALGSC). C28 and C191 are joined by a disulfide. E36 serves as a coordination point for Zn(2+). FAD contacts are provided by residues 61 to 62 (MS), S62, 81 to 82 (EA), R89, and 105 to 108 (GPMR). A substrate-binding site is contributed by R108. 3 residues coordinate Zn(2+): E111, E118, and E150. Residue N190 is glycosylated (N-linked (GlcNAc...) asparagine). Zn(2+) is bound at residue D219. A substrate-binding site is contributed by H241. E248 serves as a coordination point for Zn(2+). An FAD-binding site is contributed by V279. Zn(2+) contacts are provided by E299 and H332. A disulfide bond links C349 and C430. A substrate-binding site is contributed by Y390. Position 458 (H458) interacts with Zn(2+). FAD-binding positions include E475 and 482 to 487 (GWIDST). Residue 482 to 483 (GW) coordinates substrate.

This sequence belongs to the flavin monoamine oxidase family. FIG1 subfamily. As to quaternary structure, homodimer; non-covalently linked. Stabilized by a single zinc-binding site located at the dimer interface (Asp-219, His-332 and His-458). Other zinc-bind sites can be understood as transient and non-specific, and appear due to the high concentration of zinc ions used in the crystallization experiments. FAD serves as cofactor. As to expression, expressed by the venom gland.

It localises to the secreted. The enzyme catalyses an L-alpha-amino acid + O2 + H2O = a 2-oxocarboxylate + H2O2 + NH4(+). It catalyses the reaction L-leucine + O2 + H2O = 4-methyl-2-oxopentanoate + H2O2 + NH4(+). The catalysed reaction is L-phenylalanine + O2 + H2O = 3-phenylpyruvate + H2O2 + NH4(+). It carries out the reaction L-tryptophan + O2 + H2O = indole-3-pyruvate + H2O2 + NH4(+). The enzyme catalyses L-methionine + O2 + H2O = 4-methylsulfanyl-2-oxobutanoate + H2O2 + NH4(+). It catalyses the reaction L-isoleucine + O2 + H2O = (S)-3-methyl-2-oxopentanoate + H2O2 + NH4(+). The catalysed reaction is L-tyrosine + O2 + H2O = 3-(4-hydroxyphenyl)pyruvate + H2O2 + NH4(+). Its function is as follows. Catalyzes an oxidative deamination of predominantly hydrophobic and aromatic L-amino acids, thus producing hydrogen peroxide that may contribute to the diverse toxic effects of this enzyme. Shows high catalytic activity against L-Met, L-Leu, L-Phe, L-Trp, L-Tyr, L-Ile. Shows no or weak activity on L-Cys, L-Val, L-Gln, L-Thr, L-Ser, L-Lys, L-Arg, L-Asn, L-Glu, L-Gly, L-Pro, L-Asp and L-His. Induces platelet aggregation in platelet-rich plasma, probably due to hydrogen peroxide production, since catalase inhibits aggregation effect. Induces moderate mouse paw edema. Induces apoptosis and shows cytotoxicity against several cancer cell lines, which is inhibited by catalase. Shows hemolytic activity and antibacterial activities against both Gram-positive and Gram-negative bacteria. Has parasiticidal activities against both trypanosomes and leishmania, as a result of enzyme-catalyzed hydrogen peroxide production. Unlike other snake venom L-amino acid oxidases, does not induce hemorrhage (with 50 ug of enzyme). This Bothrops atrox (Barba amarilla) protein is L-amino-acid oxidase.